Here is a 230-residue protein sequence, read N- to C-terminus: Probable GTP-binding protein EngB (230 aa).

The EngB-type G domain maps to 36–224; sequence ERPKVIVMGR…KHRINKRINI (189 aa). GTP-binding positions include 44–51, 69–73, 86–89, 166–169, and 201–203; these read GRSNVGKS, GVTLK, DLPG, NKMD, and VPA. Residues Ser51 and Thr71 each contribute to the Mg(2+) site.

This sequence belongs to the TRAFAC class TrmE-Era-EngA-EngB-Septin-like GTPase superfamily. EngB GTPase family. The cofactor is Mg(2+).

Functionally, necessary for normal cell division and for the maintenance of normal septation. The polypeptide is Probable GTP-binding protein EngB (Methanococcus maripaludis (strain DSM 14266 / JCM 13030 / NBRC 101832 / S2 / LL)).